A 386-amino-acid chain; its full sequence is Methionyl-tRNA formyltransferase, mitochondrial (386 aa).

Belongs to the Fmt family.

It localises to the mitochondrion. The catalysed reaction is L-methionyl-tRNA(fMet) + (6R)-10-formyltetrahydrofolate = N-formyl-L-methionyl-tRNA(fMet) + (6S)-5,6,7,8-tetrahydrofolate + H(+). Functionally, methionyl-tRNA formyltransferase that formylates methionyl-tRNA in mitochondria and is crucial for translation initiation. This Mus musculus (Mouse) protein is Methionyl-tRNA formyltransferase, mitochondrial (Mtfmt).